A 389-amino-acid chain; its full sequence is Capreomycidine synthase (389 aa).

Residue Lys230 is modified to N6-(pyridoxal phosphate)lysine.

The protein belongs to the class-II pyridoxal-phosphate-dependent aminotransferase family. Pyridoxal 5'-phosphate is required as a cofactor.

The enzyme catalyses (2S,3S)-hydroxyarginine = (2S,3R)-capreomycidine + H2O. Its pathway is antibiotic biosynthesis. Functionally, involved in the biosynthesis of capreomycidine, an unusual amino acid used by non-ribosomal peptide synthases (NRPS) to make the tuberactinomycin class of peptide antibiotic such as viomycin and capreomycin. Catalyzes the dehydration of the C3 hydroxyl of (3S)-hydroxy-(2S)-arginine and the intramolecular cyclization to yield (2S,3R)-capreomycidine. This chain is Capreomycidine synthase, found in Streptomyces vinaceus.